Reading from the N-terminus, the 134-residue chain is Cytochrome b (134 aa).

3 helical membrane passes run 33–53, 77–98, and 113–133; these read FGSLLGVCLAVQILTGVFLAM, WVLRYLHANGASMFFICLYVHV, and WNVGILLLFAVMATAFMGYVL. 2 residues coordinate heme b: His83 and His97.

This sequence belongs to the cytochrome b family. In terms of assembly, the cytochrome bc1 complex contains 11 subunits: 3 respiratory subunits (MT-CYB, CYC1 and UQCRFS1), 2 core proteins (UQCRC1 and UQCRC2) and 6 low-molecular weight proteins (UQCRH/QCR6, UQCRB/QCR7, UQCRQ/QCR8, UQCR10/QCR9, UQCR11/QCR10 and a cleavage product of UQCRFS1). This cytochrome bc1 complex then forms a dimer. Requires heme b as cofactor.

The protein localises to the mitochondrion inner membrane. Component of the ubiquinol-cytochrome c reductase complex (complex III or cytochrome b-c1 complex) that is part of the mitochondrial respiratory chain. The b-c1 complex mediates electron transfer from ubiquinol to cytochrome c. Contributes to the generation of a proton gradient across the mitochondrial membrane that is then used for ATP synthesis. This is Cytochrome b (MT-CYB) from Anoura caudifer (Hairy-legged long-tongued bat).